Consider the following 1409-residue polypeptide: DNA-directed RNA polymerase subunit beta' (1409 aa).

Zn(2+) is bound by residues C72, C74, C87, and C90. Mg(2+)-binding residues include D462, D464, and D466. Residues C816, C890, C897, and C900 each coordinate Zn(2+).

This sequence belongs to the RNA polymerase beta' chain family. In terms of assembly, the RNAP catalytic core consists of 2 alpha, 1 beta, 1 beta' and 1 omega subunit. When a sigma factor is associated with the core the holoenzyme is formed, which can initiate transcription. Mg(2+) is required as a cofactor. Zn(2+) serves as cofactor.

The catalysed reaction is RNA(n) + a ribonucleoside 5'-triphosphate = RNA(n+1) + diphosphate. In terms of biological role, DNA-dependent RNA polymerase catalyzes the transcription of DNA into RNA using the four ribonucleoside triphosphates as substrates. The protein is DNA-directed RNA polymerase subunit beta' of Aromatoleum aromaticum (strain DSM 19018 / LMG 30748 / EbN1) (Azoarcus sp. (strain EbN1)).